The following is a 913-amino-acid chain: Collagen alpha-2(I) chain (913 aa).

Residues Ser-1–Ala-913 form a disordered region. Residues Pro-10, Pro-13, Pro-35, and Pro-41 each carry the 4-hydroxyproline modification. Composition is skewed to low complexity over residues Leu-28 to Pro-67, Val-125 to Pro-154, and Pro-199 to Pro-220. Positions Gly-254–Gly-263 are enriched in gly residues. The segment covering Ser-264–Ser-274 has biased composition (low complexity). Residues Gly-281 to Gly-303 show a composition bias toward gly residues. Over residues Pro-316–Ser-332 the composition is skewed to low complexity. A 4-hydroxyproline mark is found at Pro-338 and Pro-341. Low complexity-rich tracts occupy residues Leu-367–Ala-386 and Pro-408–Gln-421. Positions Gly-422–Gly-431 are enriched in gly residues. Composition is skewed to low complexity over residues Pro-459–Pro-476 and Glu-488–Ala-498. The span at Gly-499–Gly-517 shows a compositional bias: gly residues. Low complexity-rich tracts occupy residues Arg-527–Ser-574 and Val-581–Ala-601. Residues Lys-602–Lys-611 are compositionally biased toward basic and acidic residues. A compositionally biased stretch (low complexity) spans Pro-619 to Ala-629. The span at Gly-639–Gly-648 shows a compositional bias: gly residues. A compositionally biased stretch (low complexity) spans Thr-650 to Thr-659. Over residues Gly-696–Gly-705 the composition is skewed to gly residues. Low complexity-rich tracts occupy residues Ser-713 to Pro-740 and Leu-748 to Pro-758. Positions Gly-759–Lys-776 are enriched in gly residues. The segment covering Glu-782–Pro-797 has biased composition (low complexity). Positions Arg-807–Pro-818 are enriched in basic and acidic residues. The span at Ser-883 to Pro-895 shows a compositional bias: pro residues.

The protein belongs to the fibrillar collagen family. In terms of assembly, trimers of one alpha 2(I) and two alpha 1(I) chains. Interacts (via C-terminus) with TMEM131 (via PapD-L domain); the interaction is direct and is involved in assembly and TRAPPIII ER-to-Golgi transport complex-dependent secretion of collagen. Post-translationally, prolines at the third position of the tripeptide repeating unit (G-X-Y) are hydroxylated in some or all of the chains. In terms of tissue distribution, expressed in bones.

The protein localises to the secreted. Its subcellular location is the extracellular space. It localises to the extracellular matrix. Type I collagen is a member of group I collagen (fibrillar forming collagen). This chain is Collagen alpha-2(I) chain, found in Parocnus serus (Greater Haitian ground sloth).